A 644-amino-acid chain; its full sequence is Uromodulin (644 aa).

The signal sequence occupies residues 1 to 26; sequence MGQLLSLTWLLLVMVVTPWFTVAGAN. The EGF-like 1 domain occupies 30–66; the sequence is EARRCSECHDNATCVLDGVVTTCSCQAGFTGDGLVCE. 21 disulfides stabilise this stretch: Cys-34–Cys-43, Cys-37–Cys-52, Cys-54–Cys-65, Cys-71–Cys-84, Cys-79–Cys-93, Cys-95–Cys-107, Cys-113–Cys-127, Cys-121–Cys-136, Cys-138–Cys-149, Cys-151–Cys-162, Cys-156–Cys-173, Cys-177–Cys-270, Cys-198–Cys-285, Cys-220–Cys-258, Cys-226–Cys-290, Cys-251–Cys-259, Cys-300–Cys-309, Cys-303–Cys-318, Cys-320–Cys-350, Cys-338–Cys-428, and Cys-369–Cys-392. A glycan (N-linked (GlcNAc...) asparagine) is linked at Asn-40. Residues 67–108 enclose the EGF-like 2; calcium-binding domain; sequence DIDECATPWTHNCSNSICMNTLGSYECSCQDGFRLTPGLGCI. Asn-78 is a glycosylation site (N-linked (GlcNAc...) asparagine). In terms of domain architecture, EGF-like 3; calcium-binding spans 109–150; sequence DVNECTEQGLSNCHSLATCVNTEGSYSCVCPKGYRGDGWYCE. Residues 151-174 are beta hairpin; that stretch reads CSPGFCEPGLDCLPQGPSGKLVCQ. Residues 175–294 are D10C; that stretch reads DPCNVYETLT…CNLAYCTDPS (120 aa). An N-linked (GlcNAc...) asparagine glycan is attached at Asn-235. A glycan (N-linked (GlcNAc...) asparagine) is linked at Asn-278. Positions 295 to 326 constitute an EGF-like 4 domain; the sequence is SVEGTCEECGVDEDCVSDNGRWRCQCKQDFNV. The N-linked (GlcNAc...) asparagine glycan is linked to Asn-325. Positions 337–432 are ZP-N; it reads ECEANEIKIS…RINFECSYPL (96 aa). The ZP domain occupies 337-592; it reads ECEANEIKIS…PTCSGTRYRS (256 aa). N-linked (GlcNAc...) asparagine glycans are attached at residues Asn-399 and Asn-450. The interval 433-456 is flexible ZP-N/ZP-C linker; important for secretion and polymerization into filaments; the sequence is DMKVSLKTSLQPMVSALNISLGGT. The internal hydrophobic patch (IHP) stretch occupies residues 457-467; the sequence is GKFTVQMALFQ. Residues 457 to 592 form a ZP-C region; sequence GKFTVQMALF…PTCSGTRYRS (136 aa). Disulfide bonds link Cys-509-Cys-569, Cys-530-Cys-585, and Cys-574-Cys-581. N-linked (GlcNAc...) asparagine glycosylation occurs at Asn-516. Residues 589-592 form an essential for cleavage by HPN region; sequence RYRS. The external hydrophobic patch (EHP); regulates polymerization into filaments stretch occupies residues 601-609; it reads VLNLGPITR. The GPI-anchor amidated serine moiety is linked to residue Ser-615. The propeptide at 616 to 644 is removed in mature form; the sequence is VSKAASSNLGFLSIWLLLFLSATLTLMVH.

In terms of assembly, homodimer that then polymerizes into long filaments. The filaments can additionally assemble laterally to form a sheet. The filaments consist of a zigzag-shaped backbone with laterally protruding arms which interact with bacterial adhesin fimH. Two fimH molecules can bind to a single UMOD monomer. N-glycosylated. In terms of processing, proteolytically cleaved at a conserved C-terminal proteolytic cleavage site to generate the secreted form found in urine. This cleavage is catalyzed by HPN. As to expression, expression restricted to the thick ascending limb of the loop of Henle (TALH).

It localises to the apical cell membrane. The protein resides in the basolateral cell membrane. It is found in the cell projection. Its subcellular location is the cilium membrane. The protein localises to the secreted. Functionally, functions in biogenesis and organization of the apical membrane of epithelial cells of the thick ascending limb of Henle's loop (TALH), where it promotes formation of complex filamentous gel-like structure that may play a role in the water barrier permeability. May serve as a receptor for binding and endocytosis of cytokines (IL-1, IL-2) and TNF. Facilitates neutrophil migration across renal epithelia. Its function is as follows. In the urine, may contribute to colloid osmotic pressure, retards passage of positively charged electrolytes, and inhibits formation of liquid containing supersaturated salts and subsequent formation of salt crystals. Protects against urinary tract infections by binding to type 1 fimbriated E.coli. Binds to bacterial adhesin fimH which mediates the stable formation of bacterial aggregates, prevents the binding of E.coli to uroplakins UPK1A and UPK1B which act as urothelial receptors for type I fimbriae, and allows for pathogen clearance through micturation. Also promotes aggregation of other bacteria including K.pneumoniae, P.aeruginosa and S.mitis and so may also protect against other uropathogens. The sequence is that of Uromodulin (Umod) from Rattus norvegicus (Rat).